The sequence spans 444 residues: Tubulin beta 8B (444 aa).

The MREI motif signature appears at 1 to 4 (MREI). Residues Q11, E69, S138, G142, T143, and G144 each coordinate GTP. E69 contacts Mg(2+). S172 is modified (phosphoserine; by CDK1). N204 and N226 together coordinate GTP. The interval 421–444 (EYQQYQDATAEEEEDEEYAEEEVA) is disordered. A compositionally biased stretch (acidic residues) spans 429 to 444 (TAEEEEDEEYAEEEVA). 5-glutamyl polyglutamate is present on E436.

This sequence belongs to the tubulin family. As to quaternary structure, dimer of alpha and beta chains. A typical microtubule is a hollow water-filled tube with an outer diameter of 25 nm and an inner diameter of 15 nM. Alpha-beta heterodimers associate head-to-tail to form protofilaments running lengthwise along the microtubule wall with the beta-tubulin subunit facing the microtubule plus end conferring a structural polarity. Microtubules usually have 13 protofilaments but different protofilament numbers can be found in some organisms and specialized cells. Requires Mg(2+) as cofactor. Some glutamate residues at the C-terminus are polyglutamylated, resulting in polyglutamate chains on the gamma-carboxyl group. Polyglutamylation plays a key role in microtubule severing by spastin (SPAST). SPAST preferentially recognizes and acts on microtubules decorated with short polyglutamate tails: severing activity by SPAST increases as the number of glutamates per tubulin rises from one to eight, but decreases beyond this glutamylation threshold. Glutamylation is also involved in cilia motility. Post-translationally, some glutamate residues at the C-terminus are monoglycylated but not polyglycylated due to the absence of functional TTLL10 in human. Monoglycylation is mainly limited to tubulin incorporated into cilia and flagella axonemes, which is required for their stability and maintenance. Flagella glycylation controls sperm motility. Both polyglutamylation and monoglycylation can coexist on the same protein on adjacent residues, and lowering glycylation levels increases polyglutamylation, and reciprocally. In terms of processing, phosphorylated on Ser-172 by CDK1 during the cell cycle, from metaphase to telophase, but not in interphase. This phosphorylation inhibits tubulin incorporation into microtubules.

Its subcellular location is the cytoplasm. It localises to the cytoskeleton. Functionally, tubulin is the major constituent of microtubules, a cylinder consisting of laterally associated linear protofilaments composed of alpha- and beta-tubulin heterodimers. Microtubules grow by the addition of GTP-tubulin dimers to the microtubule end, where a stabilizing cap forms. Below the cap, tubulin dimers are in GDP-bound state, owing to GTPase activity of alpha-tubulin. The sequence is that of Tubulin beta 8B from Homo sapiens (Human).